Reading from the N-terminus, the 854-residue chain is Envelope glycoprotein gp150 (854 aa).

Residues 1-783 (MAEGFAANRQ…WIGKIPQYLK (783 aa)) lie on the Extracellular side of the membrane. N220, N258, N269, N274, N298, N330, N336, N342, N418, N422, N448, N469, N481, N499, N518, N531, N548, and N551 each carry an N-linked (GlcNAc...) asparagine; by host glycan. The fusion peptide stretch occupies residues 614-634 (IMLALATVLSIAGAGTGATAI). A coiled-coil region spans residues 641–691 (QQVLATHQEALDKITEALKINNLRLVTLEHQMLVIGLKVEAIEKFLYTAFA). The immunosuppression stretch occupies residues 660-678 (INNLRLVTLEHQMLVIGLK). N-linked (GlcNAc...) asparagine; by host glycans are attached at residues N715, N719, N727, and N735. Positions 734-770 (YNQTKYLQQKFYEIIMDIEQNNVQGKQGLQKLQNWQD) form a coiled coil. A helical membrane pass occupies residues 784 to 804 (GLLGGILGIGLGILLLILCLP). Residues 805–854 (TLVDCIRNCISKVLGYTVIAMPEIDDEEETVQMELRKNGRQCGMSEKEEE) are Cytoplasmic-facing.

The mature envelope protein (Env) consists of a trimer of SU-TM heterodimers attached by non-covalent interactions or by a labile interchain disulfide bond. Post-translationally, specific enzymatic cleavages in vivo yield mature proteins. Envelope glycoproteins are synthesized as an inactive precursor that is N-glycosylated and processed likely by host cell furin or by a furin-like protease in the Golgi to yield the mature SU and TM proteins. The cleavage site between SU and TM requires the minimal sequence [KR]-X-[KR]-R.

It is found in the virion membrane. The protein resides in the host cell membrane. The surface protein (SU) attaches the virus to the host cell by binding to its receptor. This interaction triggers the refolding of the transmembrane protein (TM) and is thought to activate its fusogenic potential by unmasking its fusion peptide. Fusion occurs at the host cell plasma membrane. Functionally, the transmembrane protein (TM) acts as a class I viral fusion protein. Under the current model, the protein has at least 3 conformational states: pre-fusion native state, pre-hairpin intermediate state, and post-fusion hairpin state. During viral and target cell membrane fusion, the coiled coil regions (heptad repeats) assume a trimer-of-hairpins structure, positioning the fusion peptide in close proximity to the C-terminal region of the ectodomain. The formation of this structure appears to drive apposition and subsequent fusion of viral and target cell membranes. Membranes fusion leads to delivery of the nucleocapsid into the cytoplasm. This is Envelope glycoprotein gp150 (env) from Feline immunodeficiency virus (strain San Diego) (FIV).